The primary structure comprises 132 residues: Histone H2A.1 (132 aa).

Serine 2 is subject to N-acetylserine. N6-acetyllysine occurs at positions 5 and 8. N6-succinyllysine occurs at positions 14 and 22. Glutamine 106 bears the N5-methylglutamine mark. Lysine 120 carries the post-translational modification N6-malonyllysine; alternate. Lysine 127 participates in a covalent cross-link: Glycyl lysine isopeptide (Lys-Gly) (interchain with G-Cter in SUMO). A Phosphoserine modification is found at serine 129. The [ST]-Q motif signature appears at 129–130 (SQ).

This sequence belongs to the histone H2A family. The nucleosome is a histone octamer containing two molecules each of H2A, H2B, H3 and H4 assembled in one H3-H4 heterotetramer and two H2A-H2B heterodimers. The octamer wraps approximately 147 bp of DNA. Phosphorylated to form H2AS128ph (gamma-H2A) in response to DNA double-strand breaks (DSBs) generated by exogenous genotoxic agents and by stalled replication forks. Phosphorylation is dependent on the DNA damage checkpoint kinases MEC1/ATR and TEL1/ATM, spreads on either side of a detected DSB site and may mark the surrounding chromatin for recruitment of proteins required for DNA damage signaling and repair. Gamma-H2A interacts with ARP4, a shared component of the NuA4 histone acetyltransferase complex and the INO80 and SWR1 chromatin remodeling complexes, and serves to recruit first NuA4, mediating histone H4 acetylation, and subsequently the INO80/SWR1 complexes, facilitating DNA resection, to DSB sites. Gamma-H2A is required for sequestering cohesin around the break site, which is important for efficient post-replicative double-strand break repair by homologous recombination, holding the damaged chromatid close to its undamaged sister template. Gamma-H2A is removed from the DNA prior to the strand invasion-primer extension step of the repair process and subsequently dephosphorylated by PPH3, a component of the histone H2A phosphatase complex (HTP-C). Dephosphorylation is necessary for efficient recovery from the DNA damage checkpoint. Post-translationally, N-acetylated by NAT4. In terms of processing, acetylated by ESA1, a component of the NuA4 histone acetyltransferase (HAT) complex, to form H2AK4ac and H2AK7ac. Glutamine methylation at Gln-106 (H2AQ105me) by NOP1 is specifically dedicated to polymerase I. It is present at 35S ribosomal DNA locus and impairs binding of the FACT complex. Post-translationally, sumoylated to from H2AK126su. May lead to transcriptional repression.

Its subcellular location is the nucleus. It is found in the chromosome. Functionally, core component of nucleosome which plays a central role in DNA double strand break (DSB) repair. Nucleosomes wrap and compact DNA into chromatin, limiting DNA accessibility to the cellular machineries which require DNA as a template. Histones thereby play a central role in transcription regulation, DNA repair, DNA replication and chromosomal stability. DNA accessibility is regulated via a complex set of post-translational modifications of histones, also called histone code, and nucleosome remodeling. This Saccharomyces cerevisiae (strain ATCC 204508 / S288c) (Baker's yeast) protein is Histone H2A.1 (HTA1).